Consider the following 438-residue polypeptide: MIRKHSLGFVASALALAVSAQAFAGTVTTDGADIVIKTKGGLEVATTDKEFSFKLGGRLQADYSRFDGFYTKNGNTADAAYFRRAFIELGGTAYKDWKYQINFDLSHNTGSSDNGYFDEASVTYTGFNPVNLKFGRFDPDFGLEKATSSKWVTAPERNAAYELADWINTHQDGMGAQVNSTLADMAYLSAGVSAKDADDSDGDSVKQFNFRGVFAPMHEAGNVLHVGVNYAYRDLDDTAFDSRIRPRLGMRGIATSGGNDAGDNGNRATFGGVSNSPAGSYKDDSVWGLEGAWAMGPFSAQAEYLARKLKADDNAYKDIKAKGYYAQLAYTLTGESRQYKLEGAKFDSVKPENKEIGAWEVFYRYDNIKVEDDNVVADTATREVGDTKAKAHNLGVNWYVNDAVKISAAYVKAKTDKITNNNGDDDGDGFVTRLQYVF.

Residues 1 to 24 form the signal peptide; the sequence is MIRKHSLGFVASALALAVSAQAFA.

This sequence belongs to the OprO/OprP family.

The protein resides in the cell outer membrane. Functionally, anion specific, the binding site has higher affinity for phosphate than chloride ions. Porin O has a higher affinity for polyphosphates (tripolyphosphate and pyrophosphate) while porin P has a higher affinity for orthophosphate. The protein is Porin O (oprO) of Pseudomonas aeruginosa (strain ATCC 15692 / DSM 22644 / CIP 104116 / JCM 14847 / LMG 12228 / 1C / PRS 101 / PAO1).